A 391-amino-acid polypeptide reads, in one-letter code: MPQALSTDILIVGGGIAGLWLNARLRRAGYATVLVESASLGGGQSVKSQGIIHGGAKYALHGALTGASEAIADMPRRWRACLGSDGELDLRGVRLLSEAHYLWSPGGLAGSLTSFFASKAVRSRVEQAKGEDLPPALRDKGFKGKAYRLTEIVFDVPDLIRRLAELAGDSLLAGERIEPLREGRELAGLCVDGREIRAQRVVLSAGAGNEALLRELGLEQPAMQRRPLHMVMVKAATLKPLYAHCLGAGPKPRITVTTHPTRDGQSVWYLGGDIAETDGVARDEAAQIAEARRELAKLLPWIDLGQAQWATLRVDRAEPAQSNLLRPDNAFLAEQGRLLVGWPTKLALAPDFADRVCARLEEDGIRPSEHAALPQLPRPPLAEPAWEVAFA.

Residues Ala17, Glu36, 44–45 (QS), 49–51 (QGI), and 346–347 (LA) each bind FAD.

The protein belongs to the DAO family. As to quaternary structure, monomer. The cofactor is FAD.

Probably functions as a FAD-dependent oxidoreductase, whose physiological substrate is unknown. Does not display amino-acid oxidase or glycerol-3-phosphate dehydrogenase activities. Is essential for growth of P.aeruginosa in the sputum of cystic fibrosis patients. This chain is Probable FAD-dependent oxidoreductase PA4991, found in Pseudomonas aeruginosa (strain ATCC 15692 / DSM 22644 / CIP 104116 / JCM 14847 / LMG 12228 / 1C / PRS 101 / PAO1).